The following is a 654-amino-acid chain: tRNA uridine 5-carboxymethylaminomethyl modification enzyme MnmG (654 aa).

Residue 17 to 22 participates in FAD binding; it reads GGGHAG. 289–303 lines the NAD(+) pocket; sequence GPRYCPSIEDKIVKF.

It belongs to the MnmG family. In terms of assembly, homodimer. Heterotetramer of two MnmE and two MnmG subunits. It depends on FAD as a cofactor.

The protein localises to the cytoplasm. Functionally, NAD-binding protein involved in the addition of a carboxymethylaminomethyl (cmnm) group at the wobble position (U34) of certain tRNAs, forming tRNA-cmnm(5)s(2)U34. In Prochlorococcus marinus (strain MIT 9515), this protein is tRNA uridine 5-carboxymethylaminomethyl modification enzyme MnmG.